We begin with the raw amino-acid sequence, 177 residues long: Large ribosomal subunit protein uL6 (177 aa).

The protein belongs to the universal ribosomal protein uL6 family. In terms of assembly, part of the 50S ribosomal subunit.

This protein binds to the 23S rRNA, and is important in its secondary structure. It is located near the subunit interface in the base of the L7/L12 stalk, and near the tRNA binding site of the peptidyltransferase center. This is Large ribosomal subunit protein uL6 from Pseudomonas syringae pv. tomato (strain ATCC BAA-871 / DC3000).